The primary structure comprises 150 residues: Cytochrome c oxidase subunit 5A, mitochondrial (150 aa).

A mitochondrion-targeting transit peptide spans 1-41 (MLGTALRRCAVAAASRAGSRGLLHPTPVPGPTAAIQSIRCY). Residues 2 to 17 (LGTALRRCAVAAASRA) carry the SIFI-degron motif. An N6-acetyllysine mark is found at K87 and K113. Position 141 is a phosphothreonine (T141).

It belongs to the cytochrome c oxidase subunit 5A family. Component of the cytochrome c oxidase (complex IV, CIV), a multisubunit enzyme composed of 14 subunits. The complex is composed of a catalytic core of 3 subunits MT-CO1, MT-CO2 and MT-CO3, encoded in the mitochondrial DNA, and 11 supernumerary subunits COX4I, COX5A, COX5B, COX6A, COX6B, COX6C, COX7A, COX7B, COX7C, COX8 and NDUFA4, which are encoded in the nuclear genome. The complex exists as a monomer or a dimer and forms supercomplexes (SCs) in the inner mitochondrial membrane with NADH-ubiquinone oxidoreductase (complex I, CI) and ubiquinol-cytochrome c oxidoreductase (cytochrome b-c1 complex, complex III, CIII), resulting in different assemblies (supercomplex SCI(1)III(2)IV(1) and megacomplex MCI(2)III(2)IV(2)). Interacts with AFG1L. Interacts with RAB5IF. Post-translationally, in response to mitochondrial stress, the precursor protein is ubiquitinated by the SIFI complex in the cytoplasm before mitochondrial import, leading to its degradation. Within the SIFI complex, UBR4 initiates ubiquitin chain that are further elongated or branched by KCMF1.

Its subcellular location is the mitochondrion inner membrane. The protein operates within energy metabolism; oxidative phosphorylation. In terms of biological role, component of the cytochrome c oxidase, the last enzyme in the mitochondrial electron transport chain which drives oxidative phosphorylation. The respiratory chain contains 3 multisubunit complexes succinate dehydrogenase (complex II, CII), ubiquinol-cytochrome c oxidoreductase (cytochrome b-c1 complex, complex III, CIII) and cytochrome c oxidase (complex IV, CIV), that cooperate to transfer electrons derived from NADH and succinate to molecular oxygen, creating an electrochemical gradient over the inner membrane that drives transmembrane transport and the ATP synthase. Cytochrome c oxidase is the component of the respiratory chain that catalyzes the reduction of oxygen to water. Electrons originating from reduced cytochrome c in the intermembrane space (IMS) are transferred via the dinuclear copper A center (CU(A)) of subunit 2 and heme A of subunit 1 to the active site in subunit 1, a binuclear center (BNC) formed by heme A3 and copper B (CU(B)). The BNC reduces molecular oxygen to 2 water molecules using 4 electrons from cytochrome c in the IMS and 4 protons from the mitochondrial matrix. The protein is Cytochrome c oxidase subunit 5A, mitochondrial (COX5A) of Otolemur crassicaudatus (Brown greater galago).